The following is a 448-amino-acid chain: Methionine aminopeptidase 2 (448 aa).

A disordered region spans residues 1–94; sequence MAAQVTDALK…PRVLLSNLFP (94 aa). A compositionally biased stretch (acidic residues) spans 37–50; it reads AEAEDSDDDDEEPV. Residues 61 to 74 are compositionally biased toward basic residues; sequence KKKRKRKKKPKKKA. Position 201 (H201) interacts with substrate. A divalent metal cation is bound by residues D221, D232, and H301. Position 309 (H309) interacts with substrate. The a divalent metal cation site is built by E334 and E429.

Belongs to the peptidase M24A family. Methionine aminopeptidase eukaryotic type 2 subfamily. It depends on Co(2+) as a cofactor. Zn(2+) is required as a cofactor. The cofactor is Mn(2+). Fe(2+) serves as cofactor.

It is found in the cytoplasm. The enzyme catalyses Release of N-terminal amino acids, preferentially methionine, from peptides and arylamides.. Cotranslationally removes the N-terminal methionine from nascent proteins. The N-terminal methionine is often cleaved when the second residue in the primary sequence is small and uncharged (Met-Ala-, Cys, Gly, Pro, Ser, Thr, or Val). The sequence is that of Methionine aminopeptidase 2 from Botryotinia fuckeliana (strain B05.10) (Noble rot fungus).